The chain runs to 254 residues: Homeobox protein Dlx4b (254 aa).

Residues 129 to 188 (IRKPRTIYSSVQLQALHQRFQQTQYLALPERADLAAKLGLTQTQVKIWFQNKRSKYKKIM) constitute a DNA-binding region (homeobox).

Belongs to the distal-less homeobox family.

Its subcellular location is the nucleus. Its function is as follows. During larvae development, may be important for neurocranium morphogenesis. In Danio rerio (Zebrafish), this protein is Homeobox protein Dlx4b (dlx4b).